A 954-amino-acid polypeptide reads, in one-letter code: Glycine dehydrogenase (decarboxylating) (954 aa).

The residue at position 704 (lysine 704) is an N6-(pyridoxal phosphate)lysine.

Belongs to the GcvP family. In terms of assembly, the glycine cleavage system is composed of four proteins: P, T, L and H. Pyridoxal 5'-phosphate serves as cofactor.

The catalysed reaction is N(6)-[(R)-lipoyl]-L-lysyl-[glycine-cleavage complex H protein] + glycine + H(+) = N(6)-[(R)-S(8)-aminomethyldihydrolipoyl]-L-lysyl-[glycine-cleavage complex H protein] + CO2. In terms of biological role, the glycine cleavage system catalyzes the degradation of glycine. The P protein binds the alpha-amino group of glycine through its pyridoxal phosphate cofactor; CO(2) is released and the remaining methylamine moiety is then transferred to the lipoamide cofactor of the H protein. The polypeptide is Glycine dehydrogenase (decarboxylating) (Rhizobium johnstonii (strain DSM 114642 / LMG 32736 / 3841) (Rhizobium leguminosarum bv. viciae)).